A 106-amino-acid polypeptide reads, in one-letter code: Protein S40-3 (106 aa).

The tract at residues 1–65 (MSEEFQESEV…TEEEGEMTPP (65 aa)) is disordered. The span at 16 to 41 (SFTRKDNKISHNNENYERKSTEKDKI) shows a compositional bias: basic and acidic residues.

Belongs to the senescence regulator S40 family.

It is found in the nucleus. Functionally, regulates senescence either by modulating WRKY53 or by activating SAG12. Affects the natural variation of cyst nematodes sex ratio and susceptibility to parasitic nematodes, depending on single nucleotide polymorphism (SNPs) between cultivars. In Arabidopsis thaliana (Mouse-ear cress), this protein is Protein S40-3.